The following is a 143-amino-acid chain: Hexaprenyl-diphosphate synthase small subunit ((2E,6E)-farnesyl-diphosphate specific) (143 aa).

In terms of assembly, dimer of heterodimer or heterotetramer composed of a small (Hexs-a) and large (Hexs-B) subunit.

It carries out the reaction 3 isopentenyl diphosphate + (2E,6E)-farnesyl diphosphate = all-trans-hexaprenyl diphosphate + 3 diphosphate. Catalyzes the condensation of three molecules of isopentenyl diphosphate with farnesyl diphosphate (FPP) to yield (all-E)-hexaprenyl diphosphate (HexPP; C30), the precursor of the prenyl side chain of menaquinone-6. Large subunit Hexs-B catalyzes the condensation reaction and the final product chain length is cooperatively regulated by both the Hexs-A and Hexs-B subunits using the whole size of the hydrophobic cleft as a ruler. This Micrococcus luteus (Micrococcus lysodeikticus) protein is Hexaprenyl-diphosphate synthase small subunit ((2E,6E)-farnesyl-diphosphate specific) (hexs-a).